Here is a 599-residue protein sequence, read N- to C-terminus: MLSYLKKNLRSYFSSRVLIFTLAIAAIIFACATFYVISLESKNFSTIIGFLLVDLAIFLILGVLLTQKFFTQNSNNDSSKLQNRIVIAFSLVAAIPTIIVSVFSVYFFNLSVQAWFDKKISTVLDQSVIVAESYIAEHKLQLKETALAVAEDLSDMYYDLIHNPALFTKTLNTEAEMRSLDEAIVLNKSTNTIVANSYLSFSLSFATIPAHLIKKADLGEPVEVKSDPTKIRMLIKLKEYNDVYLLVGRLVDNKIIDHIDATNGAAAEYNSLKNEIDNIQIKFSIMFIFIALLLLFVAISFGVIFTAKIVKPIKKLVTATDKVKDGDLTVQVPENEVDKDEIGTLYAAFNRMIKQLSRQQRDLVIAQRAMAWSDVAKKVAHEIKNPLTPILLASERLLKKFSPEIKEKEEFENYLKMIIRHTNDIKNIVSEFVLFARLPAPKFTKSELVYLVKHIVEARKLLNDNILYKFESNVDQFDFMCDATQINQVMINLLKNAEESIEGRESGKIEVTIDAKDDFISVIVIDSGKGFPPELIGKATESYVTTSSKGMGVGLAIVKRIVEEHCGILDIANREEEGAIIDIKFDLKKLDLKVGRSGG.

The next 4 helical transmembrane spans lie at 17 to 37 (VLIF…FYVI), 44 to 64 (FSTI…LGVL), 85 to 105 (IVIA…VFSV), and 285 to 305 (IMFI…GVIF). One can recognise an HAMP domain in the interval 307–361 (AKIVKPIKKLVTATDKVKDGDLTVQVPENEVDKDEIGTLYAAFNRMIKQLSRQQR). In terms of domain architecture, Histidine kinase spans 378-589 (KVAHEIKNPL…IIDIKFDLKK (212 aa)). Residue H381 is modified to Phosphohistidine; by autocatalysis.

It is found in the cell membrane. The enzyme catalyses ATP + protein L-histidine = ADP + protein N-phospho-L-histidine.. Member of the two-component regulatory system RF_0427/RF_0895. This is Putative sensor histidine kinase NtrY-like from Rickettsia felis (strain ATCC VR-1525 / URRWXCal2) (Rickettsia azadi).